A 147-amino-acid chain; its full sequence is Hemoglobin subunit gamma-1 (147 aa).

G2 carries the post-translational modification N-acetylglycine. One can recognise a Globin domain in the interval H3 to H147. T13 carries the phosphothreonine modification. Phosphoserine is present on residues S45, S51, and S53. Residue K60 is modified to N6-acetyllysine. Heme b is bound at residue H64. N6-acetyllysine is present on K83. Position 93 (H93) interacts with heme b. Residue C94 is modified to S-nitrosocysteine. The residue at position 140 (S140) is a Phosphoserine.

Belongs to the globin family. Heterotetramer of two alpha chains and two gamma chains in fetal hemoglobin (Hb F). The ratio of gamma-G to gamma-A chains in is approximately 2:1 in infant chimpanzee, and 1:2 in the adult. Red blood cells.

Its function is as follows. Gamma chains make up the fetal hemoglobin F, in combination with alpha chains. The sequence is that of Hemoglobin subunit gamma-1 (HBG1) from Pan troglodytes (Chimpanzee).